Reading from the N-terminus, the 1377-residue chain is DNA-directed RNA polymerase subunit beta (1377 aa).

This sequence belongs to the RNA polymerase beta chain family. As to quaternary structure, the RNAP catalytic core consists of 2 alpha, 1 beta, 1 beta' and 1 omega subunit. When a sigma factor is associated with the core the holoenzyme is formed, which can initiate transcription.

The catalysed reaction is RNA(n) + a ribonucleoside 5'-triphosphate = RNA(n+1) + diphosphate. Its function is as follows. DNA-dependent RNA polymerase catalyzes the transcription of DNA into RNA using the four ribonucleoside triphosphates as substrates. The chain is DNA-directed RNA polymerase subunit beta from Campylobacter lari (strain RM2100 / D67 / ATCC BAA-1060).